An 828-amino-acid polypeptide reads, in one-letter code: Periplasmic nitrate reductase (828 aa).

Residues 1–31 (MKLSRRSFMKANAVAAAAAAAGLSVPGVARA) constitute a signal peptide (tat-type signal). In terms of domain architecture, 4Fe-4S Mo/W bis-MGD-type spans 39–95 (IKWDKAPCRFCGTGCGVLVGTQQGRVVACQGDPDAPVNRGLNCIKGYFLPKIMYGKD). C46, C49, C53, and C81 together coordinate [4Fe-4S] cluster. Mo-bis(molybdopterin guanine dinucleotide) is bound by residues K83, Q150, N175, C179, 212–219 (WGSNMAEM), 243–247 (STYQH), 262–264 (QSD), M372, Q376, N482, 508–509 (SD), K531, D558, and 718–727 (TGRVLEHWHT). F794 serves as a coordination point for substrate. Mo-bis(molybdopterin guanine dinucleotide) contacts are provided by N802 and K819.

This sequence belongs to the prokaryotic molybdopterin-containing oxidoreductase family. NasA/NapA/NarB subfamily. Component of the periplasmic nitrate reductase NapAB complex composed of NapA and NapB. It depends on [4Fe-4S] cluster as a cofactor. Mo-bis(molybdopterin guanine dinucleotide) serves as cofactor. Predicted to be exported by the Tat system. The position of the signal peptide cleavage has not been experimentally proven.

It localises to the periplasm. The catalysed reaction is 2 Fe(II)-[cytochrome] + nitrate + 2 H(+) = 2 Fe(III)-[cytochrome] + nitrite + H2O. Its function is as follows. Catalytic subunit of the periplasmic nitrate reductase complex NapAB. Receives electrons from NapB and catalyzes the reduction of nitrate to nitrite. This Escherichia coli O127:H6 (strain E2348/69 / EPEC) protein is Periplasmic nitrate reductase.